A 211-amino-acid chain; its full sequence is Protein-methionine-sulfoxide reductase heme-binding subunit MsrQ (211 aa).

A run of 5 helical transmembrane segments spans residues 10-30, 82-102, 116-136, 153-173, and 178-198; these read WLKV…VWAI, LWCF…ELGV, PYLT…FTST, FVYL…KIIS, and IYAG…LSLF.

Belongs to the MsrQ family. As to quaternary structure, heterodimer of a catalytic subunit (MsrP) and a heme-binding subunit (MsrQ). It depends on FMN as a cofactor. Heme b serves as cofactor.

Its subcellular location is the cell inner membrane. Functionally, part of the MsrPQ system that repairs oxidized periplasmic proteins containing methionine sulfoxide residues (Met-O), using respiratory chain electrons. Thus protects these proteins from oxidative-stress damage caused by reactive species of oxygen and chlorine generated by the host defense mechanisms. MsrPQ is essential for the maintenance of envelope integrity under bleach stress, rescuing a wide series of structurally unrelated periplasmic proteins from methionine oxidation, including the primary periplasmic chaperone SurA and the lipoprotein Pal. MsrQ provides electrons for reduction to the reductase catalytic subunit MsrP, using the quinone pool of the respiratory chain. This is Protein-methionine-sulfoxide reductase heme-binding subunit MsrQ from Escherichia coli (strain 55989 / EAEC).